The following is a 319-amino-acid chain: L-lactate dehydrogenase (319 aa).

NAD(+)-binding positions include 10-11 (RV), D32, R37, Y62, and 76-77 (GV). Substrate contacts are provided by residues Q79, R85, and 117 to 120 (NPVD). NAD(+)-binding positions include 115 to 117 (VTN) and S140. Position 145–148 (145–148 (DTAR)) interacts with substrate. Residues R150 and H165 each coordinate beta-D-fructose 1,6-bisphosphate. H172 serves as the catalytic Proton acceptor. Y217 is modified (phosphotyrosine). T226 lines the substrate pocket.

The protein belongs to the LDH/MDH superfamily. LDH family. In terms of assembly, homotetramer.

It localises to the cytoplasm. The catalysed reaction is (S)-lactate + NAD(+) = pyruvate + NADH + H(+). The protein operates within fermentation; pyruvate fermentation to lactate; (S)-lactate from pyruvate: step 1/1. With respect to regulation, allosterically activated by fructose 1,6-bisphosphate (FBP). Inactivated by Mn(2+), Co(2+), Cd(2+) and Zn(2+). Catalyzes the conversion of lactate to pyruvate. It is stereospecific for L(+)-lactate. The chain is L-lactate dehydrogenase from Thermotoga maritima (strain ATCC 43589 / DSM 3109 / JCM 10099 / NBRC 100826 / MSB8).